The following is a 132-amino-acid chain: Binder of sperm protein homolog 1 (132 aa).

An N-terminal signal peptide occupies residues 1–17; that stretch reads MGSLMLLFVETTRNSSA. 2 consecutive Fibronectin type-II domains span residues 40–84 and 85–132; these read VTDG…FCSA and EDFA…KYCE. Cystine bridges form between Cys45/Cys69, Cys59/Cys82, Cys90/Cys116, and Cys104/Cys131. N-linked (GlcNAc...) asparagine glycosylation occurs at Asn53.

It belongs to the seminal plasma protein family. As to expression, expressed only in the epididymis.

It is found in the secreted. Its function is as follows. Binds sperm in vitro and promotes sperm capacitation. Specifically promotes capacitation induced by high density lipoproteins (HDLs). Also binds heparin, phospholipid liposomes, and weakly to gelatin. Does not bind chondroitin sulfate B. In Homo sapiens (Human), this protein is Binder of sperm protein homolog 1 (BSPH1).